Consider the following 127-residue polypeptide: Small ribosomal subunit protein uS13 (127 aa).

The interval 97–127 (PVRGQRTKTNARTRKGPRKTVAGKKGVKDLR) is disordered. A compositionally biased stretch (basic residues) spans 101-118 (QRTKTNARTRKGPRKTVA).

Belongs to the universal ribosomal protein uS13 family. In terms of assembly, part of the 30S ribosomal subunit. Forms a loose heterodimer with protein S19. Forms two bridges to the 50S subunit in the 70S ribosome.

Located at the top of the head of the 30S subunit, it contacts several helices of the 16S rRNA. In the 70S ribosome it contacts the 23S rRNA (bridge B1a) and protein L5 of the 50S subunit (bridge B1b), connecting the 2 subunits; these bridges are implicated in subunit movement. Contacts the tRNAs in the A and P-sites. This chain is Small ribosomal subunit protein uS13, found in Rhodopirellula baltica (strain DSM 10527 / NCIMB 13988 / SH1).